Here is a 263-residue protein sequence, read N- to C-terminus: E3 ubiquitin-protein ligase SINA-like 8 (263 aa).

An RING-type; degenerate zinc finger spans residues Cys-35 to Pro-71. Residues Ile-75 to Asn-261 form an SBD region. Residues Ser-78–Ile-136 form an SIAH-type zinc finger. Cys-83, Cys-90, His-102, Cys-106, Cys-113, Cys-118, His-130, and His-135 together coordinate Zn(2+).

This sequence belongs to the SINA (Seven in absentia) family.

It carries out the reaction S-ubiquitinyl-[E2 ubiquitin-conjugating enzyme]-L-cysteine + [acceptor protein]-L-lysine = [E2 ubiquitin-conjugating enzyme]-L-cysteine + N(6)-ubiquitinyl-[acceptor protein]-L-lysine.. Its pathway is protein modification; protein ubiquitination. In terms of biological role, E3 ubiquitin-protein ligase that mediates ubiquitination and subsequent proteasomal degradation of target proteins. E3 ubiquitin ligases accept ubiquitin from an E2 ubiquitin-conjugating enzyme in the form of a thioester and then directly transfers the ubiquitin to targeted substrates. It probably triggers the ubiquitin-mediated degradation of different substrates. This Arabidopsis thaliana (Mouse-ear cress) protein is E3 ubiquitin-protein ligase SINA-like 8.